The sequence spans 358 residues: Biotin synthase (358 aa).

Positions 50–277 constitute a Radical SAM core domain; the sequence is NEVQVSTLCS…KSHVRLSAGR (228 aa). Residues Cys65, Cys69, and Cys72 each coordinate [4Fe-4S] cluster. Residues Cys109, Cys140, Cys200, and Arg272 each contribute to the [2Fe-2S] cluster site.

This sequence belongs to the radical SAM superfamily. Biotin synthase family. In terms of assembly, homodimer. The cofactor is [4Fe-4S] cluster. Requires [2Fe-2S] cluster as cofactor.

The catalysed reaction is (4R,5S)-dethiobiotin + (sulfur carrier)-SH + 2 reduced [2Fe-2S]-[ferredoxin] + 2 S-adenosyl-L-methionine = (sulfur carrier)-H + biotin + 2 5'-deoxyadenosine + 2 L-methionine + 2 oxidized [2Fe-2S]-[ferredoxin]. Its pathway is cofactor biosynthesis; biotin biosynthesis; biotin from 7,8-diaminononanoate: step 2/2. Functionally, catalyzes the conversion of dethiobiotin (DTB) to biotin by the insertion of a sulfur atom into dethiobiotin via a radical-based mechanism. The chain is Biotin synthase from Cellvibrio japonicus (strain Ueda107) (Pseudomonas fluorescens subsp. cellulosa).